The chain runs to 176 residues: Disulfide bond formation protein B (176 aa).

Topologically, residues 1 to 11 (MLQLTTYRNLQ) are cytoplasmic. A helical membrane pass occupies residues 12 to 28 (VFLVIMTAIGMSFALFF). Residues 29 to 46 (LQRYMGFSPCPLCIFQRI) are Periplasmic-facing. A disulfide bridge links cysteine 38 with cysteine 41. Residues 47 to 63 (GLMIMGGFALIAALFHP) traverse the membrane as a helical segment. Over 64–70 (KSMVIRL) the chain is Cytoplasmic. Residues 71–88 (LLWLGSLAGIGWAAIVAG) form a helical membrane-spanning segment. Over 89-145 (RHVWLQHLPADQVPSCGPGLDYWLDTLPMQQVLKEVFAGSGECASIEWTFLGLSIPE) the chain is Periplasmic. Cysteine 104 and cysteine 131 form a disulfide bridge. Residues 146 to 164 (QSLILFSILILTHLLILWR) form a helical membrane-spanning segment. Topologically, residues 165-176 (IVRPSTPKPLAR) are cytoplasmic.

It belongs to the DsbB family.

The protein resides in the cell inner membrane. Required for disulfide bond formation in some periplasmic proteins. Acts by oxidizing the DsbA protein. The sequence is that of Disulfide bond formation protein B from Psychrobacter arcticus (strain DSM 17307 / VKM B-2377 / 273-4).